A 101-amino-acid polypeptide reads, in one-letter code: Large ribosomal subunit protein uL24 (101 aa).

The protein belongs to the universal ribosomal protein uL24 family. As to quaternary structure, part of the 50S ribosomal subunit.

Its function is as follows. One of two assembly initiator proteins, it binds directly to the 5'-end of the 23S rRNA, where it nucleates assembly of the 50S subunit. In terms of biological role, one of the proteins that surrounds the polypeptide exit tunnel on the outside of the subunit. This is Large ribosomal subunit protein uL24 from Thermobifida fusca (strain YX).